A 96-amino-acid chain; its full sequence is uncharacterized protein (96 aa).

Basic and acidic residues predominate over residues 1–18 (MSNVDRYDVHRDGIEKDR). Positions 1–96 (MSNVDRYDVH…REQHHQPQKQ (96 aa)) are disordered. Residues 28–46 (QNGQSQSTMDNRPPWNNDT) show a composition bias toward polar residues. Basic and acidic residues predominate over residues 70 to 96 (TIDRQQEELTKNWTESLREQHHQPQKQ).

This is an uncharacterized protein from Caenorhabditis elegans.